A 591-amino-acid chain; its full sequence is MMRSHYCGQLNESLEGQEVTLCGWVHRRRDHGGVIFLDIRDREGLAQVVFDPDRAETFAAADRVRSEYVVKITGKVRLRPAGAGNANMASGMIEVLGYELEVLNEAETPPFPLNEYSDVGEETRLRYRFIDLRRPEMAEKLRLRSRMTTSIRRYLDENGFLDVETPILTRATPEGARDYLVPSRTHAGSFFALPQSPQLFKQLLMVAGFDRYYQIAKCFRDEDLRADRQPEFTQIDIETSFLDEKDIMGLTEGMIRNLFKEVLGLEFGEFPHMTFEEAMRRYGSDKPDLRNPLELVDVADQLKEVEFKVFSGPANDPKCRIAALRVPGGASMPRKQIDDYTKFVGIYGAKGLAYIKVNERAKGVEGLQSPIVKNIPEANLNVILDRVGAVDGDIVFFGADKAKIVSEALGALRIKLGHDLNLLTCEWAPMWVVDFPMFEENDDGSFTALHHPFTAPKCSPEELEANPATALSRAYDMVLNGTELGGGSIRIHRKEMQQAVFRLLGISEAEQEEKFGFLLDALKYGAPPHGGLAFGLDRLVMLMTGAQSIREVIAFPKTQSAACVMTQAPGLVDAKALRELHIRLREQPKAE.

An L-aspartate-binding site is contributed by glutamate 174. Residues 198 to 201 (QLFK) are aspartate. Arginine 220 serves as a coordination point for L-aspartate. Residues 220–222 (RDE) and glutamine 229 contribute to the ATP site. Histidine 450 is an L-aspartate binding site. An ATP-binding site is contributed by glutamate 483. Position 490 (arginine 490) interacts with L-aspartate. ATP is bound at residue 535–538 (GLDR).

Belongs to the class-II aminoacyl-tRNA synthetase family. Type 1 subfamily. Homodimer.

It is found in the cytoplasm. The catalysed reaction is tRNA(Asx) + L-aspartate + ATP = L-aspartyl-tRNA(Asx) + AMP + diphosphate. In terms of biological role, aspartyl-tRNA synthetase with relaxed tRNA specificity since it is able to aspartylate not only its cognate tRNA(Asp) but also tRNA(Asn). Reaction proceeds in two steps: L-aspartate is first activated by ATP to form Asp-AMP and then transferred to the acceptor end of tRNA(Asp/Asn). The protein is Aspartate--tRNA(Asp/Asn) ligase of Pseudomonas fluorescens (strain ATCC BAA-477 / NRRL B-23932 / Pf-5).